A 476-amino-acid chain; its full sequence is Probable cytosolic Fe-S cluster assembly factor GI11683 (476 aa).

8 residues coordinate [4Fe-4S] cluster: cysteine 23, cysteine 68, cysteine 71, cysteine 74, cysteine 187, cysteine 243, cysteine 395, and cysteine 399.

The protein belongs to the NARF family.

Its function is as follows. Component of the cytosolic iron-sulfur (Fe/S) protein assembly machinery. Required for maturation of extramitochondrial Fe/S proteins. In Drosophila mojavensis (Fruit fly), this protein is Probable cytosolic Fe-S cluster assembly factor GI11683.